A 263-amino-acid polypeptide reads, in one-letter code: Phosphatidylglycerol--prolipoprotein diacylglyceryl transferase (263 aa).

Transmembrane regions (helical) follow at residues 10–30, 56–76, 91–111, and 117–137; these read VAIT…LFGF, MVTY…ILFY, IWNG…AMWL, and GLGF…GLFF. Residue Arg-139 coordinates a 1,2-diacyl-sn-glycero-3-phospho-(1'-sn-glycerol). 3 helical membrane passes run 171–191, 199–219, and 231–251; these read PSQL…LWVF, GHVS…VEFV, and FGWL…GLWL.

Belongs to the Lgt family.

It localises to the cell inner membrane. The enzyme catalyses L-cysteinyl-[prolipoprotein] + a 1,2-diacyl-sn-glycero-3-phospho-(1'-sn-glycerol) = an S-1,2-diacyl-sn-glyceryl-L-cysteinyl-[prolipoprotein] + sn-glycerol 1-phosphate + H(+). It functions in the pathway protein modification; lipoprotein biosynthesis (diacylglyceryl transfer). Catalyzes the transfer of the diacylglyceryl group from phosphatidylglycerol to the sulfhydryl group of the N-terminal cysteine of a prolipoprotein, the first step in the formation of mature lipoproteins. This is Phosphatidylglycerol--prolipoprotein diacylglyceryl transferase from Nitratidesulfovibrio vulgaris (strain DP4) (Desulfovibrio vulgaris).